Reading from the N-terminus, the 105-residue chain is Spermatogenesis-associated protein 8 (105 aa).

Expressed at high levels in adult testis, at moderate levels in sperm and at low levels in fetal testis. Not detected in other tissues.

This Homo sapiens (Human) protein is Spermatogenesis-associated protein 8 (SPATA8).